We begin with the raw amino-acid sequence, 114 residues long: uncharacterized protein (114 aa).

This is an uncharacterized protein from Schizosaccharomyces pombe (strain 972 / ATCC 24843) (Fission yeast).